The sequence spans 69 residues: Putative membrane protein insertion efficiency factor (69 aa).

Belongs to the UPF0161 family.

Its subcellular location is the cell membrane. In terms of biological role, could be involved in insertion of integral membrane proteins into the membrane. This is Putative membrane protein insertion efficiency factor from Desulfitobacterium hafniense (strain Y51).